Consider the following 462-residue polypeptide: ATP synthase subunit beta (462 aa).

An ATP-binding site is contributed by 151 to 158; the sequence is GGAGVGKT.

Belongs to the ATPase alpha/beta chains family. In terms of assembly, F-type ATPases have 2 components, CF(1) - the catalytic core - and CF(0) - the membrane proton channel. CF(1) has five subunits: alpha(3), beta(3), gamma(1), delta(1), epsilon(1). CF(0) has three main subunits: a(1), b(2) and c(9-12). The alpha and beta chains form an alternating ring which encloses part of the gamma chain. CF(1) is attached to CF(0) by a central stalk formed by the gamma and epsilon chains, while a peripheral stalk is formed by the delta and b chains.

The protein resides in the cell inner membrane. The enzyme catalyses ATP + H2O + 4 H(+)(in) = ADP + phosphate + 5 H(+)(out). Functionally, produces ATP from ADP in the presence of a proton gradient across the membrane. The catalytic sites are hosted primarily by the beta subunits. This Chlorobium limicola protein is ATP synthase subunit beta.